Here is a 105-residue protein sequence, read N- to C-terminus: Nitrogenase-stabilizing/protective protein NifW 1 (105 aa).

The protein belongs to the NifW family. In terms of assembly, homotrimer; associates with NifD.

Functionally, may protect the nitrogenase Fe-Mo protein from oxidative damage. The sequence is that of Nitrogenase-stabilizing/protective protein NifW 1 from Trichormus variabilis (strain ATCC 29413 / PCC 7937) (Anabaena variabilis).